A 299-amino-acid chain; its full sequence is Lipoyl synthase (299 aa).

Positions 34, 39, 45, 60, 64, 67, and 273 each coordinate [4Fe-4S] cluster. The Radical SAM core domain occupies 46–262; sequence WNKKHATVMI…KYVAYSKGFL (217 aa).

The protein belongs to the radical SAM superfamily. Lipoyl synthase family. Requires [4Fe-4S] cluster as cofactor.

The protein resides in the cytoplasm. It carries out the reaction [[Fe-S] cluster scaffold protein carrying a second [4Fe-4S](2+) cluster] + N(6)-octanoyl-L-lysyl-[protein] + 2 oxidized [2Fe-2S]-[ferredoxin] + 2 S-adenosyl-L-methionine + 4 H(+) = [[Fe-S] cluster scaffold protein] + N(6)-[(R)-dihydrolipoyl]-L-lysyl-[protein] + 4 Fe(3+) + 2 hydrogen sulfide + 2 5'-deoxyadenosine + 2 L-methionine + 2 reduced [2Fe-2S]-[ferredoxin]. It participates in protein modification; protein lipoylation via endogenous pathway; protein N(6)-(lipoyl)lysine from octanoyl-[acyl-carrier-protein]: step 2/2. Catalyzes the radical-mediated insertion of two sulfur atoms into the C-6 and C-8 positions of the octanoyl moiety bound to the lipoyl domains of lipoate-dependent enzymes, thereby converting the octanoylated domains into lipoylated derivatives. This is Lipoyl synthase from Ehrlichia canis (strain Jake).